The primary structure comprises 284 residues: uncharacterized protein (284 aa).

The helical transmembrane segment at 12-32 (ILFILFVVAFCVYLVPRVAIN) threads the bilayer.

Belongs to the serine esterase family.

It localises to the membrane. This is an uncharacterized protein from Escherichia coli (strain K12).